A 144-amino-acid chain; its full sequence is uncharacterized protein (144 aa).

Residues 1–23 (MRKILLFATVIGFLIMVSGTLSY) form the signal peptide.

This is an uncharacterized protein from Archaeoglobus fulgidus (strain ATCC 49558 / DSM 4304 / JCM 9628 / NBRC 100126 / VC-16).